The sequence spans 574 residues: DNA polymerase I (574 aa).

The 3'-5' exonuclease domain maps to 4–161; that stretch reads EYVTGEEGLK…ELFPKMRDML (158 aa).

This sequence belongs to the DNA polymerase type-A family.

The catalysed reaction is DNA(n) + a 2'-deoxyribonucleoside 5'-triphosphate = DNA(n+1) + diphosphate. The polypeptide is DNA polymerase I (polA) (Aquifex aeolicus (strain VF5)).